The following is a 421-amino-acid chain: MSKTHLTEQKFSDFALHPQVVEALEKKRFYNCTPIQALALPLTLAGRDVAGQAQTGTGKTMAFLTSTFHYLLSHPAIDDRKVNQPRALIMAPTRELAVQIHADAEPLAQATGLKLGLAYGGDGYDKQLKVLESGVDILIGTTGRLIDYAKQNHINLGAIQVVVLDEADRMYDLGFIKDIRWLFRRMPPAAQRLNMLFSATLSYRVRELAFEQMNNAEYVEVEPEQKTGHRIKEELFYPSNEEKMRLLQTLIEEEWPDRAIIFANTKHRCEDIWGHLAADGHRVGLLTGDVAQKKRLRILDEFTRGDLDILVATDVAARGLHIPAVTHVFNYDLPDDCEDYVHRIGRTGRAGASGHSISLACEEYALNLPAIESYIGHSIPVSKYNPEALMNDLPKPLRLTRSRPGNGPRRAGAPRNRRRSG.

The Q motif signature appears at 9 to 37 (QKFSDFALHPQVVEALEKKRFYNCTPIQA). In terms of domain architecture, Helicase ATP-binding spans 40-219 (LPLTLAGRDV…FEQMNNAEYV (180 aa)). 53–60 (AQTGTGKT) provides a ligand contact to ATP. A DEAD box motif is present at residues 165 to 168 (DEAD). The region spanning 245-390 (RLLQTLIEEE…VSKYNPEALM (146 aa)) is the Helicase C-terminal domain. A disordered region spans residues 396–421 (PLRLTRSRPGNGPRRAGAPRNRRRSG). The segment covering 402–414 (SRPGNGPRRAGAP) has biased composition (low complexity).

This sequence belongs to the DEAD box helicase family. RhlB subfamily. In terms of assembly, component of the RNA degradosome, which is a multiprotein complex involved in RNA processing and mRNA degradation.

It is found in the cytoplasm. The catalysed reaction is ATP + H2O = ADP + phosphate + H(+). Its function is as follows. DEAD-box RNA helicase involved in RNA degradation. Has RNA-dependent ATPase activity and unwinds double-stranded RNA. This chain is ATP-dependent RNA helicase RhlB, found in Salmonella dublin (strain CT_02021853).